The primary structure comprises 268 residues: tRNA pseudouridine synthase A (268 aa).

The active-site Nucleophile is the Asp-54. Residue Tyr-112 participates in substrate binding.

The protein belongs to the tRNA pseudouridine synthase TruA family. Homodimer.

The enzyme catalyses uridine(38/39/40) in tRNA = pseudouridine(38/39/40) in tRNA. Its function is as follows. Formation of pseudouridine at positions 38, 39 and 40 in the anticodon stem and loop of transfer RNAs. The polypeptide is tRNA pseudouridine synthase A (Bordetella petrii (strain ATCC BAA-461 / DSM 12804 / CCUG 43448)).